The chain runs to 427 residues: Flotillin-1 (427 aa).

A phosphoserine mark is found at serine 19, serine 163, and serine 385.

This sequence belongs to the band 7/mec-2 family. Flotillin subfamily. In terms of assembly, heterooligomeric complex of flotillin-1 and flotillin-2 and caveolin-1 and caveolin-2. Interacts with ECPAS.

The protein resides in the cell membrane. It localises to the endosome. It is found in the membrane. The protein localises to the caveola. Its subcellular location is the melanosome. The protein resides in the membrane raft. Functionally, may act as a scaffolding protein within caveolar membranes, functionally participating in formation of caveolae or caveolae-like vesicles. The protein is Flotillin-1 (FLOT1) of Bos taurus (Bovine).